A 169-amino-acid chain; its full sequence is Major pepsin inhibitor 3 (169 aa).

The first 20 residues, Met-1–Ser-20, serve as a signal peptide directing secretion. The residue at position 21 (Gln-21) is a Pyrrolidone carboxylic acid. Intrachain disulfides connect Cys-33-Cys-79, Cys-68-Cys-86, and Cys-99-Cys-166. Positions Glu-135–Gln-169 are disordered. Residues Ser-158 to Gln-169 are compositionally biased toward pro residues.

It belongs to the protease inhibitor I33 family. As to expression, body wall.

The protein localises to the secreted. Functionally, this is an inhibitor of the aspartic protease pepsin. The sequence is that of Major pepsin inhibitor 3 from Ascaris suum (Pig roundworm).